The primary structure comprises 221 residues: Sugar transporter SWEET1 (221 aa).

Helical transmembrane passes span 3–23 (AGGV…LGMF), 44–63 (FLPF…YGVL), 68–88 (TLII…LAYL), 102–122 (ATLL…VPDL), 129–149 (LGLF…ADLA), 160–180 (LSFS…IYGF), and 186–206 (YITV…VLFY). The region spanning 10 to 94 (FLSSACVLFT…LAYLHYSPQK (85 aa)) is the MtN3/slv 1 domain. The MtN3/slv 2 domain maps to 127-212 (QQLGLFCSVF…VLFYKYPPEQ (86 aa)). The tract at residues 149–221 (AKIIQTKSTQ…QDTKYRLLQT (73 aa)) is mediates interaction with TRPV2.

It belongs to the SWEET sugar transporter family. In terms of assembly, interacts with TRPV2; the interaction probably occurs intracellularly and depends on TRPV2 N-glycosylation.

The protein resides in the golgi apparatus membrane. It localises to the cell membrane. Functionally, mediates sugar transport across membranes. May stimulate V(D)J recombination by the activation of RAG1. In Rattus norvegicus (Rat), this protein is Sugar transporter SWEET1 (Slc50a1).